Reading from the N-terminus, the 537-residue chain is Ataxin-10 homolog (537 aa).

The protein belongs to the ataxin-10 family.

It localises to the cytoplasm. Its function is as follows. May play a role in the regulation of cytokinesis. The protein is Ataxin-10 homolog (CTR86) of Kluyveromyces lactis (strain ATCC 8585 / CBS 2359 / DSM 70799 / NBRC 1267 / NRRL Y-1140 / WM37) (Yeast).